The chain runs to 168 residues: uncharacterized protein (168 aa).

The segment at Met1–Glu52 is disordered. Over residues Glu10 to Arg23 the composition is skewed to polar residues. Residues Leu31–Glu40 are compositionally biased toward basic and acidic residues.

This is an uncharacterized protein from Mus musculus (Mouse).